The primary structure comprises 419 residues: Putative Bro-N domain-containing protein 201R (419 aa).

Positions 4–136 constitute a Bro-N domain; sequence LINLKDCKEY…KILPSIRKYG (133 aa). The stretch at 150–195 forms a coiled coil; that stretch reads QLALKDKSEEELQIKLQEERIEKENAYMKLRSEAKRHKEQIKRTLE.

It belongs to the IIV-6 201R/289L family.

This Acheta domesticus (House cricket) protein is Putative Bro-N domain-containing protein 201R.